The sequence spans 257 residues: NAD-capped RNA hydrolase NudC (257 aa).

Arginine 69 contributes to the substrate binding site. 2 residues coordinate Zn(2+): cysteine 98 and cysteine 101. Position 111 (glutamate 111) interacts with substrate. Zn(2+) contacts are provided by cysteine 116 and cysteine 119. Position 124 (tyrosine 124) interacts with substrate. Residues 125–248 enclose the Nudix hydrolase domain; the sequence is PQIAPCIIVA…TVARRLIEDT (124 aa). Residues alanine 158, glutamate 174, and glutamate 178 each contribute to the a divalent metal cation site. A Nudix box motif is present at residues 159 to 180; the sequence is GFVEVGETLEQAVAREVMEESG. 192–199 contributes to the substrate binding site; the sequence is QPWPFPQS. Glutamate 219 lines the a divalent metal cation pocket. Residue alanine 241 participates in substrate binding.

The protein belongs to the Nudix hydrolase family. NudC subfamily. Homodimer. Mg(2+) is required as a cofactor. Mn(2+) serves as cofactor. The cofactor is Zn(2+).

The catalysed reaction is a 5'-end NAD(+)-phospho-ribonucleoside in mRNA + H2O = a 5'-end phospho-adenosine-phospho-ribonucleoside in mRNA + beta-nicotinamide D-ribonucleotide + 2 H(+). The enzyme catalyses NAD(+) + H2O = beta-nicotinamide D-ribonucleotide + AMP + 2 H(+). It carries out the reaction NADH + H2O = reduced beta-nicotinamide D-ribonucleotide + AMP + 2 H(+). Its function is as follows. mRNA decapping enzyme that specifically removes the nicotinamide adenine dinucleotide (NAD) cap from a subset of mRNAs by hydrolyzing the diphosphate linkage to produce nicotinamide mononucleotide (NMN) and 5' monophosphate mRNA. The NAD-cap is present at the 5'-end of some mRNAs and stabilizes RNA against 5'-processing. Has preference for mRNAs with a 5'-end purine. Catalyzes the hydrolysis of a broad range of dinucleotide pyrophosphates. This chain is NAD-capped RNA hydrolase NudC, found in Salmonella heidelberg (strain SL476).